The chain runs to 339 residues: DNA-directed RNA polymerase subunit alpha (339 aa).

The interval 1 to 233 (MVREEVAGST…DLFLPFLHAE (233 aa)) is alpha N-terminal domain (alpha-NTD). An alpha C-terminal domain (alpha-CTD) region spans residues 264–339 (KKGIPLNCIF…IDLLKNKLSF (76 aa)).

The protein belongs to the RNA polymerase alpha chain family. As to quaternary structure, in plastids the minimal PEP RNA polymerase catalytic core is composed of four subunits: alpha, beta, beta', and beta''. When a (nuclear-encoded) sigma factor is associated with the core the holoenzyme is formed, which can initiate transcription.

It localises to the plastid. The protein resides in the chloroplast. The enzyme catalyses RNA(n) + a ribonucleoside 5'-triphosphate = RNA(n+1) + diphosphate. Functionally, DNA-dependent RNA polymerase catalyzes the transcription of DNA into RNA using the four ribonucleoside triphosphates as substrates. The protein is DNA-directed RNA polymerase subunit alpha of Australopyrum velutinum (Mountain wheat-grass).